Reading from the N-terminus, the 191-residue chain is Rubrerythrin (191 aa).

A Ferritin-like diiron domain is found at 1–146 (MKSLKGSRTE…DFARNIKEGR (146 aa)). Residues Glu20, Glu53, Glu94, Glu97, Glu128, His131, Cys158, Cys161, Cys174, and Cys177 each coordinate Fe(3+). The 39-residue stretch at 153 to 191 (ATKWRCRNCGYVHEGTGAPELCPACAHPKAHFELLGINW) folds into the Rubredoxin-like domain.

In terms of assembly, homodimer. Possesses two rubredoxin-like centers and two non-sulfur oxo-bridged di-iron centers per dimer. The cofactor is Fe(3+).

Its subcellular location is the cytoplasm. Its function is as follows. May provide oxidative stress protection via catalytic reduction of intracellular hydrogen peroxide. The chain is Rubrerythrin (rbr) from Nitratidesulfovibrio vulgaris (strain ATCC 29579 / DSM 644 / CCUG 34227 / NCIMB 8303 / VKM B-1760 / Hildenborough) (Desulfovibrio vulgaris).